Here is a 176-residue protein sequence, read N- to C-terminus: Acireductone dioxygenase (176 aa).

Fe(2+) contacts are provided by H81, H83, E87, and H126. Ni(2+) contacts are provided by H81, H83, E87, and H126.

The protein belongs to the acireductone dioxygenase (ARD) family. Fe(2+) is required as a cofactor. It depends on Ni(2+) as a cofactor.

Its subcellular location is the cytoplasm. It is found in the nucleus. The catalysed reaction is 1,2-dihydroxy-5-(methylsulfanyl)pent-1-en-3-one + O2 = 4-methylsulfanyl-2-oxobutanoate + formate + 2 H(+). It catalyses the reaction 1,2-dihydroxy-5-(methylsulfanyl)pent-1-en-3-one + O2 = 3-(methylsulfanyl)propanoate + CO + formate + 2 H(+). It participates in amino-acid biosynthesis; L-methionine biosynthesis via salvage pathway; L-methionine from S-methyl-5-thio-alpha-D-ribose 1-phosphate: step 5/6. Its function is as follows. Catalyzes 2 different reactions between oxygen and the acireductone 1,2-dihydroxy-3-keto-5-methylthiopentene (DHK-MTPene) depending upon the metal bound in the active site. Fe-containing acireductone dioxygenase (Fe-ARD) produces formate and 2-keto-4-methylthiobutyrate (KMTB), the alpha-ketoacid precursor of methionine in the methionine recycle pathway. Ni-containing acireductone dioxygenase (Ni-ARD) produces methylthiopropionate, carbon monoxide and formate, and does not lie on the methionine recycle pathway. The chain is Acireductone dioxygenase (adi1) from Sclerotinia sclerotiorum (strain ATCC 18683 / 1980 / Ss-1) (White mold).